Consider the following 65-residue polypeptide: Large ribosomal subunit protein bL35 (65 aa).

Positions 1 to 29 (MPKMKTNRGAAKRFKKTGSGRIKRGKAFT) are disordered. The span at 10-26 (AAKRFKKTGSGRIKRGK) shows a compositional bias: basic residues.

The protein belongs to the bacterial ribosomal protein bL35 family.

In Desulfotalea psychrophila (strain LSv54 / DSM 12343), this protein is Large ribosomal subunit protein bL35.